Consider the following 113-residue polypeptide: Iron-sulfur cluster insertion protein ErpA (113 aa).

The iron-sulfur cluster site is built by C41, C105, and C107.

This sequence belongs to the HesB/IscA family. As to quaternary structure, homodimer. The cofactor is iron-sulfur cluster.

In terms of biological role, required for insertion of 4Fe-4S clusters for at least IspG. The chain is Iron-sulfur cluster insertion protein ErpA from Mannheimia succiniciproducens (strain KCTC 0769BP / MBEL55E).